Here is a 193-residue protein sequence, read N- to C-terminus: Peptidyl-tRNA hydrolase (193 aa).

Position 16 (Y16) interacts with tRNA. The Proton acceptor role is filled by H21. TRNA contacts are provided by F67, N69, and N115.

The protein belongs to the PTH family. As to quaternary structure, monomer.

It localises to the cytoplasm. It carries out the reaction an N-acyl-L-alpha-aminoacyl-tRNA + H2O = an N-acyl-L-amino acid + a tRNA + H(+). Functionally, hydrolyzes ribosome-free peptidyl-tRNAs (with 1 or more amino acids incorporated), which drop off the ribosome during protein synthesis, or as a result of ribosome stalling. Catalyzes the release of premature peptidyl moieties from peptidyl-tRNA molecules trapped in stalled 50S ribosomal subunits, and thus maintains levels of free tRNAs and 50S ribosomes. The polypeptide is Peptidyl-tRNA hydrolase (Vesicomyosocius okutanii subsp. Calyptogena okutanii (strain HA)).